Consider the following 398-residue polypeptide: Carbamoyl phosphate synthase large chain (398 aa).

In terms of domain architecture, ATP-grasp spans 1 to 187 (KLGVPQPEGG…LAKIAAKVIV (187 aa)). Residues 1-255 (KLGVPQPEGG…YKAELAADNV (255 aa)) are carbamoyl phosphate synthetic domain. ATP is bound by residues arginine 32, aspartate 71, leucine 73, glutamate 78, glycine 103, valine 104, histidine 105, serine 106, glutamine 146, and glutamate 158. Mg(2+) is bound by residues glutamine 146, glutamate 158, and asparagine 160. 3 residues coordinate Mn(2+): glutamine 146, glutamate 158, and asparagine 160. An MGS-like domain is found at 254–395 (NVLPLTGKVF…NEYHKEMEEE (142 aa)). The tract at residues 256 to 398 (LPLTGKVFLS…HKEMEEENKV (143 aa)) is allosteric domain.

Belongs to the CarB family. As to quaternary structure, composed of two chains; the small (or glutamine) chain promotes the hydrolysis of glutamine to ammonia, which is used by the large (or ammonia) chain to synthesize carbamoyl phosphate. Tetramer of heterodimers (alpha,beta)4. Mg(2+) is required as a cofactor. It depends on Mn(2+) as a cofactor.

It carries out the reaction hydrogencarbonate + L-glutamine + 2 ATP + H2O = carbamoyl phosphate + L-glutamate + 2 ADP + phosphate + 2 H(+). It catalyses the reaction hydrogencarbonate + NH4(+) + 2 ATP = carbamoyl phosphate + 2 ADP + phosphate + 2 H(+). The protein operates within amino-acid biosynthesis; L-arginine biosynthesis; carbamoyl phosphate from bicarbonate: step 1/1. It participates in pyrimidine metabolism; UMP biosynthesis via de novo pathway; (S)-dihydroorotate from bicarbonate: step 1/3. Functionally, large subunit of the glutamine-dependent carbamoyl phosphate synthetase (CPSase). CPSase catalyzes the formation of carbamoyl phosphate from the ammonia moiety of glutamine, carbonate, and phosphate donated by ATP, constituting the first step of 2 biosynthetic pathways, one leading to arginine and/or urea and the other to pyrimidine nucleotides. The large subunit (synthetase) binds the substrates ammonia (free or transferred from glutamine from the small subunit), hydrogencarbonate and ATP and carries out an ATP-coupled ligase reaction, activating hydrogencarbonate by forming carboxy phosphate which reacts with ammonia to form carbamoyl phosphate. The chain is Carbamoyl phosphate synthase large chain from Methanosarcina barkeri.